The following is a 707-amino-acid chain: Solute carrier family 15 member 1 (707 aa).

A helical transmembrane segment spans residues 1 to 21 (MGMSKSLSCFGYPLSIFFIVV). Topologically, residues 22–53 (NEFCERFSYYGMRALLILYFRNFIGWDDNLST) are extracellular. N50 carries N-linked (GlcNAc...) asparagine glycosylation. Residues 54–74 (VIYHTFVALCYLTPILGALIA) traverse the membrane as a helical segment. The Cytoplasmic portion of the chain corresponds to 75–82 (DAWLGKFK). A helical membrane pass occupies residues 83 to 103 (TIVWLSIVYTIGQAVTSLSSV). The Extracellular segment spans residues 104 to 118 (NELTDNNHDGTPDSL). The chain crosses the membrane as a helical span at residues 119-139 (PVHVAVCMIGLLLIALGTGGI). Residues 140–161 (KPCVSAFGGDQFEEGQEKQRNR) are Cytoplasmic-facing. The chain crosses the membrane as a helical span at residues 162-182 (FFSIFYLAINAGSLLSTIITP). The Extracellular segment spans residues 183-198 (MVRVQQCGIHVKQACY). The helical transmembrane segment at 199–219 (PLAFGIPAILMAVSLIVFIIG) threads the bilayer. The Cytoplasmic portion of the chain corresponds to 220-276 (SGMYKKFKPQGNILSKVVKCICFAIKNRFRHRSKQFPKRAHWLDWAKEKYDERLIAQ). A helical transmembrane segment spans residues 277–297 (IKMVTRVLFLYIPLPMFWALF). At 298 to 327 (DQQGSRWTLQATTMSGRIGILEIQPDQMQT) the chain is on the extracellular side. The chain crosses the membrane as a helical span at residues 328 to 348 (VNTILIIILVPIMDAVVYPLI). At 349–361 (AKCGLNFTSLKKM) the chain is on the cytoplasmic side. A helical membrane pass occupies residues 362–382 (TIGMFLASMAFVAAAILQVEI). The Extracellular segment spans residues 383 to 583 (DKTLPVFPKA…PPNTMNMAWQ (201 aa)). Residues 383 to 583 (DKTLPVFPKA…PPNTMNMAWQ (201 aa)) form an extracellular domain (ECD) region. 3 N-linked (GlcNAc...) asparagine glycosylation sites follow: N439, N498, and N513. A helical membrane pass occupies residues 584–604 (IPQYFLITSGEVVFSITGLEF). At 605–618 (SYSQAPSNMKSVLQ) the chain is on the cytoplasmic side. The helical transmembrane segment at 619-639 (AGWLLTVAVGNIIVLIVAGAG) threads the bilayer. The Extracellular portion of the chain corresponds to 640–644 (QINKQ). The chain crosses the membrane as a helical span at residues 645–665 (WAEYILFAALLLVVCVIFAIM). The Cytoplasmic portion of the chain corresponds to 666–707 (ARFYTYVNPAEIEAQFEEDEKKKNPEKNDLYPSLAPVSQTQM). The segment at 682 to 707 (EEDEKKKNPEKNDLYPSLAPVSQTQM) is disordered. Over residues 684 to 694 (DEKKKNPEKND) the composition is skewed to basic and acidic residues.

It belongs to the major facilitator superfamily. Proton-dependent oligopeptide transporter (POT/PTR) (TC 2.A.17) family. In terms of assembly, interacts (via extracellular domain region) with trypsin. Intestine, kidney, liver and low in brain.

It is found in the apical cell membrane. It carries out the reaction a dipeptide(out) + H(+)(out) = a dipeptide(in) + H(+)(in). The enzyme catalyses an L-amino acid tripeptide(out) + H(+)(out) = an L-amino acid tripeptide(in) + H(+)(in). It catalyses the reaction L-alanyl-L-lysine(out) + H(+)(out) = L-alanyl-L-lysine(in) + H(+)(in). The catalysed reaction is L-alanyl-L-proline(out) + H(+)(out) = L-alanyl-L-proline(in) + H(+)(in). It carries out the reaction L-alanyl-L-valine(out) + H(+)(out) = L-alanyl-L-valine(in) + H(+)(in). The enzyme catalyses carnosine(out) + H(+)(out) = carnosine(in) + H(+)(in). It catalyses the reaction glycyl-L-glutamine(out) + H(+)(out) = glycyl-L-glutamine(in) + H(+)(in). The catalysed reaction is glycyl-L-leucine(out) + H(+)(out) = glycyl-L-leucine(in) + H(+)(in). It carries out the reaction glycyl-L-proline(out) + H(+)(out) = glycyl-L-proline(in) + H(+)(in). The enzyme catalyses glycyl-sarcosine(out) + H(+)(out) = glycyl-sarcosine(in) + H(+)(in). It catalyses the reaction L-leucyl-L-leucine(out) + H(+)(out) = L-leucyl-L-leucine(in) + H(+)(in). The catalysed reaction is L-leucyl-L-proline(out) + H(+)(out) = L-leucyl-L-proline(in) + H(+)(in). It carries out the reaction L-phenylalanyl-L-leucine(out) + H(+)(out) = L-phenylalanyl-L-leucine(in) + H(+)(in). The enzyme catalyses L-phenylalanyl-L-phenylalanine(out) + H(+)(out) = L-phenylalanyl-L-phenylalanine(in) + H(+)(in). It catalyses the reaction L-lysyl-glycine(out) + H(+)(out) = L-lysyl-glycine(in) + H(+)(in). The catalysed reaction is L-tyrosylglycine(out) + H(+)(out) = L-tyrosylglycine(in) + H(+)(in). It carries out the reaction L-alanyl-L-aspartate(out) + 2 H(+)(out) = L-alanyl-L-aspartate(in) + 2 H(+)(in). The enzyme catalyses L-aspartyl-glycine(out) + 2 H(+)(out) = L-aspartyl-glycine(in) + 2 H(+)(in). It catalyses the reaction glycyl-L-aspartate(out) + 2 H(+)(out) = glycyl-L-aspartate(in) + 2 H(+)(in). The catalysed reaction is glycyl-L-glutamate(out) + 2 H(+)(out) = glycyl-L-glutamate(in) + 2 H(+)(in). It carries out the reaction L-alanyl-L-leucyl-L-alanine(out) + H(+)(out) = L-alanyl-L-leucyl-L-alanine(in) + H(+)(in). The enzyme catalyses L-alanyl-L-prolylglycine(out) + H(+)(out) = L-alanyl-L-prolylglycine(in) + H(+)(in). It catalyses the reaction glycylglycyl-L-isoleucine(out) + H(+)(out) = glycylglycyl-L-isoleucine(in) + H(+)(in). The catalysed reaction is glycylglycyl-L-proline(out) + H(+)(out) = glycylglycyl-L-proline(in) + H(+)(in). It carries out the reaction L-methionyl-L-phenylalanyl-L-methionine(out) + H(+)(out) = L-methionyl-L-phenylalanyl-L-methionine(in) + H(+)(in). The enzyme catalyses N-acetyl-D-muramoyl-L-alanyl-D-isoglutamine(out) + 2 H(+)(out) = N-acetyl-D-muramoyl-L-alanyl-D-isoglutamine(in) + 2 H(+)(in). It catalyses the reaction N(alpha)-formyl-L-methionyl-L-leucyl-L-phenylalanine(out) + 2 H(+)(out) = N(alpha)-formyl-L-methionyl-L-leucyl-L-phenylalanine(in) + 2 H(+)(in). In terms of biological role, electrogenic proton-coupled amino-acid transporter that transports oligopeptides of 2 to 4 amino acids with a preference for dipeptides. Transports neutral and monovalently charged peptides with a proton to peptide stoichiometry of 1:1 or 2:1. Primarily responsible for the absorption of dietary di- and tripeptides from the small intestinal lumen. Mediates transepithelial transport of muramyl and N-formylated bacterial dipeptides contributing to recognition of pathogenic bacteria by the mucosal immune system. The chain is Solute carrier family 15 member 1 (SLC15A1) from Oryctolagus cuniculus (Rabbit).